We begin with the raw amino-acid sequence, 222 residues long: MKIYYLFFVLIYLIYFINLVYCEKNDTSIILDDILDIQHNRKLFPKITHQDIENIRQIRRMNLHSIVKSMSTLNVQDLGLGIFAGLEKSVNPNPNECIDSLRTSIDNTNQVFYDISNFFGITIQEFLTLIQIFPTIIKDDIRLYDACGANVIVMKIGKFAHIIRTEGLQSFANYAKNALYSNPFYLIPVTRGLLESLVTKNYQMLGVHIGEYLGILFNSDDD.

The first 22 residues, 1–22 (MKIYYLFFVLIYLIYFINLVYC), serve as a signal peptide directing secretion. An N-linked (GlcNAc...) asparagine glycan is attached at asparagine 25.

It belongs to the Sct family.

It is found in the secreted. The chain is Secreted protein D from Dictyostelium discoideum (Social amoeba).